Reading from the N-terminus, the 349-residue chain is Aldehyde reductase YahK (349 aa).

Residues Cys-40, His-62, Cys-93, Cys-96, Cys-99, Cys-107, and Cys-158 each coordinate Zn(2+).

This sequence belongs to the zinc-containing alcohol dehydrogenase family. The cofactor is Zn(2+).

The enzyme catalyses a primary alcohol + NADP(+) = an aldehyde + NADPH + H(+). Its function is as follows. Catalyzes the reduction of a wide range of aldehydes into their corresponding alcohols. Has a strong preference for NADPH over NADH as the electron donor. Cannot use a ketone as substrate. Is a major source of NADPH-dependent aldehyde reductase activity in E.coli. The in vivo functions of YahK has yet to be determined. The polypeptide is Aldehyde reductase YahK (yahK) (Escherichia coli (strain K12)).